We begin with the raw amino-acid sequence, 245 residues long: Ribonuclease PH (245 aa).

Phosphate contacts are provided by residues Arg86 and 124 to 126 (GTR).

It belongs to the RNase PH family. Homohexameric ring arranged as a trimer of dimers.

The enzyme catalyses tRNA(n+1) + phosphate = tRNA(n) + a ribonucleoside 5'-diphosphate. Functionally, phosphorolytic 3'-5' exoribonuclease that plays an important role in tRNA 3'-end maturation. Removes nucleotide residues following the 3'-CCA terminus of tRNAs; can also add nucleotides to the ends of RNA molecules by using nucleoside diphosphates as substrates, but this may not be physiologically important. Probably plays a role in initiation of 16S rRNA degradation (leading to ribosome degradation) during starvation. This Bacillus cereus (strain ATCC 10987 / NRS 248) protein is Ribonuclease PH.